The primary structure comprises 436 residues: Hydrolyase ccsE (436 aa).

Ser249 (nucleophile) is an active-site residue.

Belongs to the AB hydrolase superfamily. FUS2 hydrolase family. As to quaternary structure, homodimer.

It functions in the pathway mycotoxin biosynthesis. In terms of biological role, hydrolyase; part of the gene cluster that mediates the biosynthesis of a family of the mycotoxins cytochalasins E and K. The hybrid PKS-NRPS synthetase ccsA and the enoyl reductase ccsC are responsible for fusion of phenylalanine with an octaketide backbone and subsequent release of the stable tetramic acid precursor. The polyketide synthase module (PKS) of the PKS-NRPS ccsA is responsible for the synthesis of the octaketide backbone. The downstream nonribosomal peptide synthetase (NRPS) amidates the carboxyl end of the octaketide with a phenylalanine. A reductase-like domain (R) at the C-terminus catalyzes the reductive release of the polyketide-amino acid intermediate. Because ccsA lacks a designated enoylreductase (ER) domain, the required activity is provided the enoyl reductase ccsC. Upon formation of the 11-membered carbocycle-fused perhydroisoindolone intermediate, a number of oxidative steps are required to afford the final cytochalasin E and K, including two hydroxylations at C17 and C18, one alcohol oxidation at C17, one epoxidation at C6 and C7 and two Baeyer-Villiger oxidations. The oxidative modification at C17, C18 and the C6-C7 epoxidation are likely to be catalyzed by the two cytochrome P450 oxygenases ccsD and ccsG. CcsD may be responsible for the epoxidation of the C6-C7 double bond. CcsG may be responsible for the successive oxidative modifications at C17 and C18. The double Baeyer-Villiger oxidations of ketocytochalasin to precytochalasin and cytochalasin Z(16) are among the final steps leading to cytochalasin E and K and are catalyzed by ccsB. The first oxygen insertion step follows that of the classic BVMO mechanism, generating the ester precytochalasin. Release of precytochalasin into an aqueous environment can generate the shunt product iso-precytochalasin through spontaneous isomerization. Alternatively, precytochalasin can undergo further oxidation by ccsB to yield the in-line carbonate-containing cytochalasin Z(16). Cytochalasin Z(16) is a precursor to cytochalasin E and cytochalasin K, whereas iso-precytochalasin is a precursor to cytochalasin Z(17) and rosellichalasin. The hydrolyase ccsE may catalyze hydrolysis of epoxide bond in cytochalasin E to afford cytochalasin K. The function of ccsF has not been assigned but it may play a role in post-PKS-NRPS biosynthetic step, resistance or transport of cytochalasins and related PKS-NRPS products. The chain is Hydrolyase ccsE from Aspergillus clavatus (strain ATCC 1007 / CBS 513.65 / DSM 816 / NCTC 3887 / NRRL 1 / QM 1276 / 107).